The primary structure comprises 229 residues: Potassium/proton antiporter CemA (229 aa).

Transmembrane regions (helical) follow at residues 7–27, 114–134, 154–174, and 189–209; these read LIPL…SLSF, IICF…LVIL, ILLL…ELMI, and IISG…KYWI.

The protein belongs to the CemA family.

It is found in the plastid. It localises to the chloroplast inner membrane. It carries out the reaction K(+)(in) + H(+)(out) = K(+)(out) + H(+)(in). Contributes to K(+)/H(+) antiport activity by supporting proton efflux to control proton extrusion and homeostasis in chloroplasts in a light-dependent manner to modulate photosynthesis. Prevents excessive induction of non-photochemical quenching (NPQ) under continuous-light conditions. Indirectly promotes efficient inorganic carbon uptake into chloroplasts. This chain is Potassium/proton antiporter CemA, found in Fagus sylvatica (Beechnut).